A 485-amino-acid chain; its full sequence is Pyruvate kinase (485 aa).

R33 contributes to the substrate binding site. 4 residues coordinate K(+): N35, S37, D67, and T68. 35–38 (NFSH) lines the ATP pocket. The ATP site is built by R74 and K155. Mg(2+) is bound at residue E221. Positions 244, 245, and 277 each coordinate substrate. D245 serves as a coordination point for Mg(2+).

This sequence belongs to the pyruvate kinase family. Homotetramer. It depends on Mg(2+) as a cofactor. K(+) serves as cofactor.

It catalyses the reaction pyruvate + ATP = phosphoenolpyruvate + ADP + H(+). Its pathway is carbohydrate degradation; glycolysis; pyruvate from D-glyceraldehyde 3-phosphate: step 5/5. This chain is Pyruvate kinase (pyk), found in Chlamydia trachomatis serovar D (strain ATCC VR-885 / DSM 19411 / UW-3/Cx).